The chain runs to 335 residues: S-adenosylmethionine:tRNA ribosyltransferase-isomerase (335 aa).

The protein belongs to the QueA family. In terms of assembly, monomer.

It is found in the cytoplasm. It catalyses the reaction 7-aminomethyl-7-carbaguanosine(34) in tRNA + S-adenosyl-L-methionine = epoxyqueuosine(34) in tRNA + adenine + L-methionine + 2 H(+). It participates in tRNA modification; tRNA-queuosine biosynthesis. Functionally, transfers and isomerizes the ribose moiety from AdoMet to the 7-aminomethyl group of 7-deazaguanine (preQ1-tRNA) to give epoxyqueuosine (oQ-tRNA). The chain is S-adenosylmethionine:tRNA ribosyltransferase-isomerase from Thermosipho africanus (strain TCF52B).